The chain runs to 106 residues: ATP-dependent Clp protease adapter protein ClpS (106 aa).

The segment covering 1-13 has biased composition (basic and acidic residues); the sequence is MPRKTSHEHDHGL. A disordered region spans residues 1–21; the sequence is MPRKTSHEHDHGLVVETSKPE.

This sequence belongs to the ClpS family. As to quaternary structure, binds to the N-terminal domain of the chaperone ClpA.

Its function is as follows. Involved in the modulation of the specificity of the ClpAP-mediated ATP-dependent protein degradation. The sequence is that of ATP-dependent Clp protease adapter protein ClpS from Xanthomonas campestris pv. campestris (strain 8004).